Consider the following 173-residue polypeptide: Small ribosomal subunit protein uS5 (173 aa).

The region spanning Trp17–Val80 is the S5 DRBM domain.

Belongs to the universal ribosomal protein uS5 family. As to quaternary structure, part of the 30S ribosomal subunit. Contacts proteins S4 and S8.

Functionally, with S4 and S12 plays an important role in translational accuracy. Located at the back of the 30S subunit body where it stabilizes the conformation of the head with respect to the body. The protein is Small ribosomal subunit protein uS5 of Microcystis aeruginosa (strain NIES-843 / IAM M-2473).